We begin with the raw amino-acid sequence, 305 residues long: uncharacterized protein (305 aa).

This sequence belongs to the IIV-6 436R family.

This is an uncharacterized protein from Acheta domesticus (House cricket).